The chain runs to 165 residues: Chorismate pyruvate-lyase (165 aa).

Residues M35, R77, L115, and E156 each contribute to the substrate site.

This sequence belongs to the UbiC family. Monomer.

It is found in the cytoplasm. The catalysed reaction is chorismate = 4-hydroxybenzoate + pyruvate. It functions in the pathway cofactor biosynthesis; ubiquinone biosynthesis. Its function is as follows. Removes the pyruvyl group from chorismate, with concomitant aromatization of the ring, to provide 4-hydroxybenzoate (4HB) for the ubiquinone pathway. The protein is Chorismate pyruvate-lyase of Salmonella enteritidis PT4 (strain P125109).